Here is a 403-residue protein sequence, read N- to C-terminus: Transcription factor E2F1 (403 aa).

The tract at residues Ala-44 to Ala-85 is cyclin A/CDK2 binding. The tract at residues Thr-45–Pro-64 is disordered. The DNA-binding element occupies Gly-87–Gln-171. Residues Leu-130 to Leu-151 are leucine-zipper. The DEF box motif lies at Glu-135–Gln-171. The interval Val-172–Val-261 is dimerization. The transactivation stretch occupies residues Pro-335 to Phe-403. Positions Gln-375–Asp-392 are retinoblastoma protein RB1 binding.

The protein belongs to the E2F/DP family. Component of the DRTF1/E2F transcription factor complex. Forms heterodimers with DP family members. The E2F1 complex binds specifically hypophosphorylated RB1, the interaction represses E2F1-driven transcription. During the cell cycle, RB1 becomes phosphorylated in mid-to-late G1 phase, detaches from the DRTF1/E2F complex, rendering E2F transcriptionally active. Viral oncoproteins, notably E1A, T-antigen and HPV E7, are capable of sequestering RB1, thus releasing the active complex.

Its subcellular location is the nucleus. Functionally, transcription activator that binds DNA cooperatively with DP proteins through the E2 recognition site, 5'-TTTC[CG]CGC-3' found in the promoter region of a number of genes whose products are involved in cell cycle regulation or in DNA replication. The DRTF1/E2F complex functions in the control of cell-cycle progression from G1 to S phase. E2F1 binds preferentially RB1 in a cell-cycle dependent manner. It can mediate both cell proliferation and TP53/p53-dependent apoptosis. Blocks adipocyte differentiation by binding to specific promoters repressing CEBPA binding to its target gene promoters. Positively regulates transcription of RRP1B. The chain is Transcription factor E2F1 from Gallus gallus (Chicken).